Consider the following 224-residue polypeptide: UPF0758 protein PSPPH_0210 (224 aa).

Positions 102 to 224 (ALENPTQVRN…PLSMVERGLM (123 aa)) constitute an MPN domain. Residues histidine 173, histidine 175, and aspartate 186 each coordinate Zn(2+). Residues 173–186 (HNHPSGITTPSRSD) carry the JAMM motif motif.

Belongs to the UPF0758 family.

The protein is UPF0758 protein PSPPH_0210 of Pseudomonas savastanoi pv. phaseolicola (strain 1448A / Race 6) (Pseudomonas syringae pv. phaseolicola (strain 1448A / Race 6)).